We begin with the raw amino-acid sequence, 338 residues long: DNA-directed RNA polymerase subunit alpha (338 aa).

Positions 1-225 (MLISQRPTLT…ELFGLARELN (225 aa)) are alpha N-terminal domain (alpha-NTD). The segment at 242–338 (YIAAYSMPIE…YIDVEPEDAE (97 aa)) is alpha C-terminal domain (alpha-CTD). Positions 314–338 (FDPSTLEGYDAETGGYIDVEPEDAE) are disordered.

Belongs to the RNA polymerase alpha chain family. As to quaternary structure, homodimer. The RNAP catalytic core consists of 2 alpha, 1 beta, 1 beta' and 1 omega subunit. When a sigma factor is associated with the core the holoenzyme is formed, which can initiate transcription.

It catalyses the reaction RNA(n) + a ribonucleoside 5'-triphosphate = RNA(n+1) + diphosphate. Its function is as follows. DNA-dependent RNA polymerase catalyzes the transcription of DNA into RNA using the four ribonucleoside triphosphates as substrates. The polypeptide is DNA-directed RNA polymerase subunit alpha (Corynebacterium efficiens (strain DSM 44549 / YS-314 / AJ 12310 / JCM 11189 / NBRC 100395)).